The following is a 94-amino-acid chain: Cell division topological specificity factor (94 aa).

The protein belongs to the MinE family.

In terms of biological role, prevents the cell division inhibition by proteins MinC and MinD at internal division sites while permitting inhibition at polar sites. This ensures cell division at the proper site by restricting the formation of a division septum at the midpoint of the long axis of the cell. This Acetivibrio thermocellus (strain ATCC 27405 / DSM 1237 / JCM 9322 / NBRC 103400 / NCIMB 10682 / NRRL B-4536 / VPI 7372) (Clostridium thermocellum) protein is Cell division topological specificity factor.